A 278-amino-acid polypeptide reads, in one-letter code: HTH-type transcriptional regulator HdfR (278 aa).

Residues 1-58 (MDTELLKTFLEVSRTRHFGRAAEALYLTQSAVSFRIRQLENQLGVNLFTRHRNNIRLT) form the HTH lysR-type domain. Positions 18–37 (FGRAAEALYLTQSAVSFRIR) form a DNA-binding region, H-T-H motif.

Belongs to the LysR transcriptional regulatory family.

Its function is as follows. Negatively regulates the transcription of the flagellar master operon flhDC by binding to the upstream region of the operon. The protein is HTH-type transcriptional regulator HdfR of Salmonella newport (strain SL254).